Reading from the N-terminus, the 382-residue chain is Intermediate transcription factor 3 large subunit (382 aa).

This sequence belongs to the poxviruses A23 family. As to quaternary structure, heterodimer of a 45 kDa and a 32 kDa subunit.

Acts with RNA polymerase to initiate transcription from intermediate gene promoters. This chain is Intermediate transcription factor 3 large subunit (VITF3L), found in Oryctolagus cuniculus (Rabbit).